The sequence spans 169 residues: Peptide methionine sulfoxide reductase MsrA (169 aa).

The active site involves C10.

This sequence belongs to the MsrA Met sulfoxide reductase family.

It catalyses the reaction L-methionyl-[protein] + [thioredoxin]-disulfide + H2O = L-methionyl-(S)-S-oxide-[protein] + [thioredoxin]-dithiol. The enzyme catalyses [thioredoxin]-disulfide + L-methionine + H2O = L-methionine (S)-S-oxide + [thioredoxin]-dithiol. Its function is as follows. Has an important function as a repair enzyme for proteins that have been inactivated by oxidation. Catalyzes the reversible oxidation-reduction of methionine sulfoxide in proteins to methionine. The sequence is that of Peptide methionine sulfoxide reductase MsrA from Streptococcus equi subsp. equi (strain 4047).